The following is a 374-amino-acid chain: DNA integrity scanning protein DisA (374 aa).

Positions 20 to 158 (DGLMRASLSA…DGMRRVLEDS (139 aa)) constitute a DAC domain. Residues glycine 87, leucine 105, and 118 to 122 (TRHRT) each bind ATP.

This sequence belongs to the DisA family. In terms of assembly, homooctamer. The cofactor is Mg(2+).

The enzyme catalyses 2 ATP = 3',3'-c-di-AMP + 2 diphosphate. In terms of biological role, participates in a DNA-damage check-point that is active prior to asymmetric division when DNA is damaged. DisA forms globular foci that rapidly scan along the chromosomes during sporulation, searching for lesions. When a lesion is present, DisA pauses at the lesion site. This triggers a cellular response that culminates in a temporary block in sporulation initiation. Its function is as follows. Also has diadenylate cyclase activity, catalyzing the condensation of 2 ATP molecules into cyclic di-AMP (c-di-AMP). c-di-AMP acts as a signaling molecule that couples DNA integrity with progression of sporulation. The rise in c-di-AMP level generated by DisA while scanning the chromosome, operates as a positive signal that advances sporulation; upon encountering a lesion, the DisA focus arrests at the damaged site and halts c-di-AMP synthesis. In Streptomyces avermitilis (strain ATCC 31267 / DSM 46492 / JCM 5070 / NBRC 14893 / NCIMB 12804 / NRRL 8165 / MA-4680), this protein is DNA integrity scanning protein DisA.